A 715-amino-acid chain; its full sequence is ATP-dependent zinc metalloprotease FtsH (715 aa).

The Cytoplasmic segment spans residues 1–10 (MKNKNRGFFR). A helical transmembrane segment spans residues 11–31 (SSLSYAFVILAVIFLIYSFFG). Residues 32-137 (RSDGSVKHLS…KPAASNFWGS (106 aa)) are Extracellular-facing. Residues 138 to 158 (MLTLILPTLIMFALLYWMLIG) form a helical membrane-spanning segment. The Cytoplasmic segment spans residues 159-715 (SQRGQGGSGG…LLDAVNNKFD (557 aa)). The segment at 167 to 187 (GGPGGIMSFGRSKAKPADPKQ) is disordered. 233–240 (GPPGTGKT) contributes to the ATP binding site. Histidine 455 lines the Zn(2+) pocket. Residue glutamate 456 is part of the active site. Positions 459 and 531 each coordinate Zn(2+).

In the central section; belongs to the AAA ATPase family. This sequence in the C-terminal section; belongs to the peptidase M41 family. Homohexamer. It depends on Zn(2+) as a cofactor.

The protein localises to the cell membrane. In terms of biological role, acts as a processive, ATP-dependent zinc metallopeptidase for both cytoplasmic and membrane proteins. Plays a role in the quality control of integral membrane proteins. Can complement an E.coli ftsH disruption mutant. In Oenococcus oeni (Leuconostoc oenos), this protein is ATP-dependent zinc metalloprotease FtsH.